A 133-amino-acid polypeptide reads, in one-letter code: Large ribosomal subunit protein bL12 (133 aa).

This sequence belongs to the bacterial ribosomal protein bL12 family. Homodimer. Part of the ribosomal stalk of the 50S ribosomal subunit. Forms a multimeric L10(L12)X complex, where L10 forms an elongated spine to which 2 to 4 L12 dimers bind in a sequential fashion. Binds GTP-bound translation factors.

Forms part of the ribosomal stalk which helps the ribosome interact with GTP-bound translation factors. Is thus essential for accurate translation. The polypeptide is Large ribosomal subunit protein bL12 (Trichodesmium erythraeum (strain IMS101)).